The following is a 462-amino-acid chain: uncharacterized protein (462 aa).

Asp-12, His-14, Asp-48, Asn-81, His-179, and His-202 together coordinate a divalent metal cation. A coiled-coil region spans residues Glu-258 to Lys-291.

This sequence belongs to the metallophosphoesterase superfamily. The cofactor is a divalent metal cation.

This is an uncharacterized protein from Bacillus subtilis (strain 168).